The following is a 448-amino-acid chain: StAR-related lipid transfer protein 3 (448 aa).

One can recognise an MENTAL domain in the interval 47–219 (FSDVRRTFCL…YSPPESLAGS (173 aa)). The next 4 helical transmembrane spans lie at 53–73 (TFCLFVTFDLLFITLLWIIEL), 96–116 (FFDIFLLAVFRFLCLQLGYAA), 122–142 (WWVIAITTLVTTAFLIAKVIL), and 150–170 (AFGYVLPITSFVVAWLETWFL). The FFAT signature appears at 208 to 214 (QFYSPPE). In terms of domain architecture, START spans 232–445 (AVTEQEKAFV…LRQRINEVHV (214 aa)).

It belongs to the STARD3 family. In terms of assembly, homodimer. In terms of processing, phosphorylated. Phosphorylation allows the tethering of two membranes that participates in the formation of ER-endosome contacts. Phosphorylation of FFAT motif drives membrane tethering between the endoplasmic reticulum and late endosomes that in turn allows the efficient transport of sterol mediated by the START domain.

It is found in the late endosome membrane. It carries out the reaction cholesterol(in) = cholesterol(out). Sterol-binding protein that mediates cholesterol transport from the endoplasmic reticulum to endosomes. The sterol transport mechanism is triggered by phosphorylation of FFAT motif that leads to membrane tethering between the endoplasmic reticulum and late endosomes. Acts as a lipid transfer protein that redirects sterol to the endosome at the expense of the cell membrane and favors membrane formation inside endosomes. The sequence is that of StAR-related lipid transfer protein 3 from Danio rerio (Zebrafish).